We begin with the raw amino-acid sequence, 600 residues long: MKNLMNGACLALLMSGTAALANEQRAGRDRQAPQWAIQMGDYANTRYSTLDQINKDNVKDLRVAWTFSTGVLRGHEGSPLVIGDVMYVHTPFPNRVFALDLNDNGKILWRYEPQQDPNVIAVMSCDTVYRGLSYADGMILLGQADTTVVALDATSGEVKWSTKIGDPGIGETLTATVVPVKDKVLVGISGGEYGVRGRMTALNLTDGSEAWKAWSTGPDEELLVDPETTTHLGKPIGADSSLNSWEGDQWQIGGGTIWGWFSYDPDLNLVYYGTGNPSTWNPSQRPGDNKWSMTIMARDADTGMAKWFYQMTPHDEWDYDGVNEMILTNQTVDGQERKLLTHFDRNGLAYTMDRETGELLVAEKYDPVVNWTTGVDMDPNSETYGRPAVVAEYSTAQNGEDENTTGVCPAALGTKDQQPAAFSPKTNLFYVPTNHVCMDYEPFRVAYTAGQPYVGATLSMYPAPNSHGGMGNFIAWHNTTGEIKWSVPEQFSVWSGALATAGDVVFYGTLEGYLKPVDAQTGEELYKFKTPSGIIGNVMTYEHGGKQYVGILSGVGGWAGIGLAAGLTNPNDGLGAVGGYASLSQYTELGGQLTVFELPG.

The N-terminal stretch at 1–21 is a signal peptide; the sequence is MKNLMNGACLALLMSGTAALA. Ca(2+) is bound by residues Glu-192 and Asn-276. Catalysis depends on Asp-318, which acts as the Proton acceptor.

The protein belongs to the bacterial PQQ dehydrogenase family. Requires pyrroloquinoline quinone as cofactor. Ca(2+) serves as cofactor.

In Paracoccus denitrificans, this protein is Putative dehydrogenase XoxF (xoxF).